A 208-amino-acid chain; its full sequence is Uracil phosphoribosyltransferase (208 aa).

Residues R78, R103, and 130–138 (DPMLATGGS) contribute to the 5-phospho-alpha-D-ribose 1-diphosphate site. Uracil contacts are provided by residues I193 and 198 to 200 (GDA). A 5-phospho-alpha-D-ribose 1-diphosphate-binding site is contributed by D199.

This sequence belongs to the UPRTase family. Mg(2+) is required as a cofactor.

It carries out the reaction UMP + diphosphate = 5-phospho-alpha-D-ribose 1-diphosphate + uracil. Its pathway is pyrimidine metabolism; UMP biosynthesis via salvage pathway; UMP from uracil: step 1/1. With respect to regulation, allosterically activated by GTP. Its function is as follows. Catalyzes the conversion of uracil and 5-phospho-alpha-D-ribose 1-diphosphate (PRPP) to UMP and diphosphate. The sequence is that of Uracil phosphoribosyltransferase from Aeromonas salmonicida (strain A449).